The following is a 341-amino-acid chain: L-threonine 3-dehydrogenase (341 aa).

Cysteine 38 contributes to the Zn(2+) binding site. Catalysis depends on charge relay system residues threonine 40 and histidine 43. Residues histidine 63, glutamate 64, cysteine 93, cysteine 96, cysteine 99, and cysteine 107 each contribute to the Zn(2+) site. Residues isoleucine 175, aspartate 195, arginine 200, 262–264, and 286–287 contribute to the NAD(+) site; these read LGI and IY.

This sequence belongs to the zinc-containing alcohol dehydrogenase family. Homotetramer. Zn(2+) serves as cofactor.

It localises to the cytoplasm. It carries out the reaction L-threonine + NAD(+) = (2S)-2-amino-3-oxobutanoate + NADH + H(+). It participates in amino-acid degradation; L-threonine degradation via oxydo-reductase pathway; glycine from L-threonine: step 1/2. Functionally, catalyzes the NAD(+)-dependent oxidation of L-threonine to 2-amino-3-ketobutyrate. The chain is L-threonine 3-dehydrogenase from Escherichia coli O17:K52:H18 (strain UMN026 / ExPEC).